A 37-amino-acid chain; its full sequence is MKINASVRKICEKCRLIRRRGRIIVICFNPKHKQRQG.

Belongs to the bacterial ribosomal protein bL36 family.

It localises to the plastid. Its subcellular location is the chloroplast. The protein is Large ribosomal subunit protein bL36c of Phaseolus angularis (Azuki bean).